The chain runs to 203 residues: V-type ATP synthase subunit D (203 aa).

Belongs to the V-ATPase D subunit family.

Functionally, produces ATP from ADP in the presence of a proton gradient across the membrane. The sequence is that of V-type ATP synthase subunit D (atpD) from Chlamydia muridarum (strain MoPn / Nigg).